We begin with the raw amino-acid sequence, 197 residues long: Large ribosomal subunit protein bL25 (197 aa).

Belongs to the bacterial ribosomal protein bL25 family. CTC subfamily. In terms of assembly, part of the 50S ribosomal subunit; part of the 5S rRNA/L5/L18/L25 subcomplex. Contacts the 5S rRNA. Binds to the 5S rRNA independently of L5 and L18.

Functionally, this is one of the proteins that binds to the 5S RNA in the ribosome where it forms part of the central protuberance. The chain is Large ribosomal subunit protein bL25 from Streptomyces avermitilis (strain ATCC 31267 / DSM 46492 / JCM 5070 / NBRC 14893 / NCIMB 12804 / NRRL 8165 / MA-4680).